The following is a 476-amino-acid chain: tRNA(Ile)-lysidine synthase (476 aa).

An ATP-binding site is contributed by 30–35; that stretch reads SGGPDS.

This sequence belongs to the tRNA(Ile)-lysidine synthase family.

The protein resides in the cytoplasm. The enzyme catalyses cytidine(34) in tRNA(Ile2) + L-lysine + ATP = lysidine(34) in tRNA(Ile2) + AMP + diphosphate + H(+). In terms of biological role, ligates lysine onto the cytidine present at position 34 of the AUA codon-specific tRNA(Ile) that contains the anticodon CAU, in an ATP-dependent manner. Cytidine is converted to lysidine, thus changing the amino acid specificity of the tRNA from methionine to isoleucine. This is tRNA(Ile)-lysidine synthase from Bacillus thuringiensis subsp. konkukian (strain 97-27).